We begin with the raw amino-acid sequence, 163 residues long: Nucleotide-binding protein C8J_0350 (163 aa).

Belongs to the YajQ family.

In terms of biological role, nucleotide-binding protein. The polypeptide is Nucleotide-binding protein C8J_0350 (Campylobacter jejuni subsp. jejuni serotype O:6 (strain 81116 / NCTC 11828)).